The sequence spans 246 residues: Acetoacetate decarboxylase (246 aa).

K115 functions as the Schiff-base intermediate with acetoacetate in the catalytic mechanism.

Belongs to the ADC family.

The catalysed reaction is acetoacetate + H(+) = acetone + CO2. Functionally, catalyzes the conversion of acetoacetate to acetone and carbon dioxide. The protein is Acetoacetate decarboxylase of Clostridium beijerinckii (strain ATCC 51743 / NCIMB 8052) (Clostridium acetobutylicum).